A 181-amino-acid polypeptide reads, in one-letter code: Small ribosomal subunit protein uS4 (181 aa).

The S4 RNA-binding domain maps to 108–172; the sequence is RRLQTQVYRR…SPLVSDIHSE (65 aa).

It belongs to the universal ribosomal protein uS4 family. Part of the 30S ribosomal subunit. Contacts protein S5. The interaction surface between S4 and S5 is involved in control of translational fidelity.

Its function is as follows. One of the primary rRNA binding proteins, it binds directly to 16S rRNA where it nucleates assembly of the body of the 30S subunit. In terms of biological role, with S5 and S12 plays an important role in translational accuracy. In Methanospirillum hungatei JF-1 (strain ATCC 27890 / DSM 864 / NBRC 100397 / JF-1), this protein is Small ribosomal subunit protein uS4.